We begin with the raw amino-acid sequence, 131 residues long: Profilin (131 aa).

Belongs to the profilin family. In terms of assembly, occurs in many kinds of cells as a complex with monomeric actin in a 1:1 ratio.

It localises to the cytoplasm. It is found in the cytoskeleton. Binds to actin and affects the structure of the cytoskeleton. At high concentrations, profilin prevents the polymerization of actin, whereas it enhances it at low concentrations. By binding to PIP2, it inhibits the formation of IP3 and DG. This chain is Profilin, found in Prunus persica (Peach).